We begin with the raw amino-acid sequence, 448 residues long: Tryptophan--tRNA ligase (448 aa).

Residues 10-12 (TPT) and 18-19 (GN) each bind ATP. The 'HIGH' region motif lies at 11–19 (PTGTPHLGN). Asp-143 contacts L-tryptophan. ATP-binding positions include 155–157 (GRD), Leu-197, and 204–208 (KMSKS). Positions 204-208 (KMSKS) match the 'KMSKS' region motif.

Belongs to the class-I aminoacyl-tRNA synthetase family. In terms of assembly, homodimer.

The protein resides in the cytoplasm. The catalysed reaction is tRNA(Trp) + L-tryptophan + ATP = L-tryptophyl-tRNA(Trp) + AMP + diphosphate + H(+). In terms of biological role, catalyzes the attachment of tryptophan to tRNA(Trp). In Pseudomonas aeruginosa (strain ATCC 15692 / DSM 22644 / CIP 104116 / JCM 14847 / LMG 12228 / 1C / PRS 101 / PAO1), this protein is Tryptophan--tRNA ligase.